Consider the following 890-residue polypeptide: Tyrosine-protein kinase receptor TYRO3 (890 aa).

The N-terminal stretch at 1–40 is a signal peptide; the sequence is MALRRSMGRPGLPPLPLPPPPRLGLLLAALASLLLPESAA. Ig-like C2-type domains are found at residues 41–128 and 139–220; these read AGLK…TEIS and PFFT…ATVH. Residues 41–429 lie on the Extracellular side of the membrane; it reads AGLKLMGAPV…QGPPHSRTSW (389 aa). N-linked (GlcNAc...) asparagine glycosylation occurs at N63. 2 cysteine pairs are disulfide-bonded: C64/C117 and C160/C203. Residues N191, N230, N240, N293, N366, and N380 are each glycosylated (N-linked (GlcNAc...) asparagine). Fibronectin type-III domains follow at residues 227-320 and 325-416; these read APFN…TKGL and APQN…SHDR. The helical transmembrane segment at 430 to 450 threads the bilayer; the sequence is VPVVLGVLTALVTAAALALIL. At 451 to 890 the chain is on the cytoplasmic side; it reads LRKRRKETRF…QQGLLPHSSC (440 aa). Residue S466 is modified to Phosphoserine. A Protein kinase domain is found at 518–790; the sequence is FTLGRMLGKG…CLRMELENIL (273 aa). Residues 524–532 and K550 each bind ATP; that span reads LGKGEFGSV. The active-site Proton acceptor is the D655. Phosphotyrosine; by autocatalysis occurs at positions 681, 685, 686, and 804. 2 disordered regions span residues 815-837 and 851-871; these read AGGSLELPGRDQPYSGAGDGSGM and LTPGGLAEQPGQAEHQPESPL. Phosphoserine occurs at positions 818 and 869.

Belongs to the protein kinase superfamily. Tyr protein kinase family. AXL/UFO subfamily. In terms of assembly, monomer and homodimer. Interacts (via N-terminus) with extracellular ligands TULP1 and GAS6. Interacts with PIK3R1; this interaction increases PI3-kinase activity. In terms of processing, autophosphorylated. As to expression, abundant in the brain and lower levels in other tissues.

It localises to the cell membrane. The catalysed reaction is L-tyrosyl-[protein] + ATP = O-phospho-L-tyrosyl-[protein] + ADP + H(+). Its function is as follows. Receptor tyrosine kinase that transduces signals from the extracellular matrix into the cytoplasm by binding to several ligands including TULP1 or GAS6. Regulates many physiological processes including cell survival, migration and differentiation. Ligand binding at the cell surface induces dimerization and autophosphorylation of TYRO3 on its intracellular domain that provides docking sites for downstream signaling molecules. Following activation by ligand, interacts with PIK3R1 and thereby enhances PI3-kinase activity. Activates the AKT survival pathway, including nuclear translocation of NF-kappa-B and up-regulation of transcription of NF-kappa-B-regulated genes. TYRO3 signaling plays a role in various processes such as neuron protection from excitotoxic injury, platelet aggregation and cytoskeleton reorganization. Also plays an important role in inhibition of Toll-like receptors (TLRs)-mediated innate immune response by activating STAT1, which selectively induces production of suppressors of cytokine signaling SOCS1 and SOCS3. (Microbial infection) Acts as a receptor for lassa virus and lymphocytic choriomeningitis virus, possibly through GAS6 binding to phosphatidyl-serine at the surface of virion envelope. In terms of biological role, (Microbial infection) Acts as a receptor for Ebolavirus, possibly through GAS6 binding to phosphatidyl-serine at the surface of virion envelope. This chain is Tyrosine-protein kinase receptor TYRO3 (TYRO3), found in Homo sapiens (Human).